The sequence spans 560 residues: Flagellar M-ring protein (560 aa).

Residues Ile-26–Ala-46 form a helical membrane-spanning segment. Positions Val-304–Ile-372 are disordered. A compositionally biased stretch (low complexity) spans Pro-331 to Ala-353. Residues Gly-354–Tyr-366 are compositionally biased toward polar residues. The helical transmembrane segment at Phe-455–Leu-475 threads the bilayer.

The protein belongs to the FliF family. The basal body constitutes a major portion of the flagellar organelle and consists of four rings (L,P,S, and M) mounted on a central rod. The M ring is integral to the inner membrane of the cell and may be connected to the flagellar rod via the S ring. The S (supramembrane ring) lies just distal to the M ring. The L and P rings lie in the outer membrane and the periplasmic space, respectively.

It localises to the cell inner membrane. It is found in the bacterial flagellum basal body. The M ring may be actively involved in energy transduction. This is Flagellar M-ring protein (fliF) from Salmonella typhimurium (strain LT2 / SGSC1412 / ATCC 700720).